Here is a 98-residue protein sequence, read N- to C-terminus: NADH-ubiquinone oxidoreductase chain 4L (98 aa).

Helical transmembrane passes span 1 to 21, 29 to 49, and 61 to 81; these read MTLI…GLLM, ALLC…LTIL, and IILL…LVMV.

The protein belongs to the complex I subunit 4L family. As to quaternary structure, core subunit of respiratory chain NADH dehydrogenase (Complex I) which is composed of 45 different subunits.

It is found in the mitochondrion inner membrane. The enzyme catalyses a ubiquinone + NADH + 5 H(+)(in) = a ubiquinol + NAD(+) + 4 H(+)(out). Functionally, core subunit of the mitochondrial membrane respiratory chain NADH dehydrogenase (Complex I) which catalyzes electron transfer from NADH through the respiratory chain, using ubiquinone as an electron acceptor. Part of the enzyme membrane arm which is embedded in the lipid bilayer and involved in proton translocation. This chain is NADH-ubiquinone oxidoreductase chain 4L (MT-ND4L), found in Balaenoptera bonaerensis (Antarctic minke whale).